The primary structure comprises 401 residues: tRNA(Met) cytidine acetate ligase (401 aa).

ATP-binding positions include 7 to 20 (VVEY…HLYH), Gly101, Asn160, and 185 to 186 (RI).

Belongs to the TmcAL family.

Its subcellular location is the cytoplasm. It carries out the reaction cytidine(34) in elongator tRNA(Met) + acetate + ATP = N(4)-acetylcytidine(34) in elongator tRNA(Met) + AMP + diphosphate. In terms of biological role, catalyzes the formation of N(4)-acetylcytidine (ac(4)C) at the wobble position of elongator tRNA(Met), using acetate and ATP as substrates. First activates an acetate ion to form acetyladenylate (Ac-AMP) and then transfers the acetyl group to tRNA to form ac(4)C34. The chain is tRNA(Met) cytidine acetate ligase from Anoxybacillus flavithermus (strain DSM 21510 / WK1).